The chain runs to 379 residues: Gonadotropin-releasing hormone II receptor (379 aa).

Residues 1–40 are Extracellular-facing; it reads MSAGNGTPWGSAAGEESWAASGVAVEGSELPTFSAAAKVR. A helical transmembrane segment spans residues 41 to 60; the sequence is VGVTIVLFVSSAGGNLAVLW. The Cytoplasmic segment spans residues 61–76; it reads SVTRPQPSQLRPSPVR. Residues 77–96 traverse the membrane as a helical segment; the sequence is TLFAHLAAADLLVTFVVMPL. Over 97 to 114 the chain is Extracellular; sequence DATWNITVQWLAEDIACR. N-linked (GlcNAc...) asparagine glycosylation occurs at asparagine 101. Cysteine 113 and cysteine 188 are joined by a disulfide. The helical transmembrane segment at 115–136 threads the bilayer; sequence TLMFLKLMAMYSAAFLPVVIGL. Topologically, residues 137–160 are cytoplasmic; that stretch reads DRQAAVLNPLGSRSGVRKLLGAAW. Residues 161-178 form a helical membrane-spanning segment; it reads GLSFLLALPQLFLFHTVH. Residues 179 to 204 are Extracellular-facing; that stretch reads RAGPVPFTQCVTKGSFKARWQETTYN. A helical membrane pass occupies residues 205-224; it reads LFTFRCLFLLPLTAMAICYS. Residues 225 to 278 lie on the Cytoplasmic side of the membrane; it reads HIVLSVSSPQTRKGSHAPAGEFALCRSFDNCPRVRLWALRLALLILLTFILCWT. A helical transmembrane segment spans residues 279–297; it reads PYYLLGLWYWFSPTMLTEV. At 298–303 the chain is on the extracellular side; it reads PPSLSH. The helical transmembrane segment at 304–323 threads the bilayer; that stretch reads ILFLFGLLNAPLDPLLYGAF. Over 324-379 the chain is Cytoplasmic; sequence TLGCQRGHQELSIDSSNEGSGRMLQQEIHALRQQEVQKTVTSRSAGETKDISITSI.

It belongs to the G-protein coupled receptor 1 family. In terms of processing, phosphorylated on the C-terminal cytoplasmic tail.

It localises to the cell membrane. In terms of biological role, receptor for gonadotropin releasing hormone II (GnRH II). This receptor mediates its action by association with G proteins that activate a phosphatidylinositol-calcium second messenger system. The polypeptide is Gonadotropin-releasing hormone II receptor (GNRHR2) (Macaca mulatta (Rhesus macaque)).